Reading from the N-terminus, the 327-residue chain is Tetraacyldisaccharide 4'-kinase (327 aa).

Residue 52 to 59 coordinates ATP; sequence TLGGAGKT.

It belongs to the LpxK family.

It catalyses the reaction a lipid A disaccharide + ATP = a lipid IVA + ADP + H(+). Its pathway is glycolipid biosynthesis; lipid IV(A) biosynthesis; lipid IV(A) from (3R)-3-hydroxytetradecanoyl-[acyl-carrier-protein] and UDP-N-acetyl-alpha-D-glucosamine: step 6/6. In terms of biological role, transfers the gamma-phosphate of ATP to the 4'-position of a tetraacyldisaccharide 1-phosphate intermediate (termed DS-1-P) to form tetraacyldisaccharide 1,4'-bis-phosphate (lipid IVA). The chain is Tetraacyldisaccharide 4'-kinase from Methylorubrum populi (strain ATCC BAA-705 / NCIMB 13946 / BJ001) (Methylobacterium populi).